We begin with the raw amino-acid sequence, 155 residues long: Transcriptional regulator MraZ (155 aa).

SpoVT-AbrB domains follow at residues 15–62 (TYEN…GMDR) and 93–136 (SEEL…NPTA).

The protein belongs to the MraZ family. As to quaternary structure, forms oligomers.

It is found in the cytoplasm. It localises to the nucleoid. In Rhodospirillum rubrum (strain ATCC 11170 / ATH 1.1.1 / DSM 467 / LMG 4362 / NCIMB 8255 / S1), this protein is Transcriptional regulator MraZ.